Reading from the N-terminus, the 235-residue chain is MICOS complex subunit MIC25 (235 aa).

A lipid anchor (N-myristoyl glycine) is attached at Gly-2. Ser-13 and Ser-31 each carry phosphoserine. Disordered regions lie at residues 31-90 and 106-132; these read SENV…VKRY and KRER…HEEQ. Residues 129–176 adopt a coiled-coil conformation; sequence HEEQKSVRLARELESREAELRRRDTFYKEQLERIERKNAEMYKLSSEQ. In terms of domain architecture, CHCH spans 194–235; the sequence is EPVCSGLQAQILHCYRDRPHEVLLCSDLVKAYQRCVSAAHKG. Short sequence motifs (cx9C motif) lie at residues 197-207 and 218-228; these read CSGLQAQILHC and CSDLVKAYQRC. 2 disulfide bridges follow: Cys-197/Cys-228 and Cys-207/Cys-218.

Belongs to the MICOS complex subunit Mic19 family. Metazoan Mic25 subfamily. As to quaternary structure, component of the mitochondrial contact site and cristae organizing system (MICOS) complex, composed of at least MICOS10/MIC10, CHCHD3/MIC19, CHCHD6/MIC25, APOOL/MIC27, IMMT/MIC60, APOO/MIC23/MIC26 and MICOS13/MIC13. This complex was also known under the names MINOS or MitOS complex. The MICOS complex associates with mitochondrial outer membrane proteins SAMM50, MTX1 and MTX2 (together described as components of the mitochondrial outer membrane sorting assembly machinery (SAM) complex) and DNAJC11, mitochondrial inner membrane protein TMEM11 and with HSPA9. The MICOS and SAM complexes together with DNAJC11 are part of a large protein complex spanning both membranes termed the mitochondrial intermembrane space bridging (MIB) complex. Interacts with DISC1. Interacts with DISC1. Interacts with IMMT/MIC60. (Microbial infection) Interacts with human cytomegalovirus protein UL37 isoform vMIA; this interaction rewires mitochondria by engaging the conserved MICOS complex.

It localises to the mitochondrion inner membrane. Its subcellular location is the mitochondrion. Its function is as follows. Component of the MICOS complex, a large protein complex of the mitochondrial inner membrane that plays crucial roles in the maintenance of crista junctions, inner membrane architecture, and formation of contact sites to the outer membrane. This Homo sapiens (Human) protein is MICOS complex subunit MIC25 (CHCHD6).